The primary structure comprises 133 residues: Male-specific protein scotti (133 aa).

The tract at residues 11 to 57 is disordered; sequence FPSNGLGNNNNDPNQQRGERPRQPHPDLGWILDAPNEPPRNRNPLLY. Residues 14 to 24 are compositionally biased toward low complexity; it reads NGLGNNNNDPN. Asn-83 carries an N-linked (GlcNAc...) asparagine glycan.

The protein belongs to the male-specific scotti family.

Post-meiotically transcribed gene that has a role in late spermiogenesis; required for actin cone progression during spermatid individualization. The chain is Male-specific protein scotti from Drosophila persimilis (Fruit fly).